A 283-amino-acid chain; its full sequence is Prolyl 4-hydroxylase 1 (283 aa).

The Cytoplasmic segment spans residues 1-6; it reads MAPAMK. The helical; Signal-anchor for type II membrane protein transmembrane segment at 7–27 threads the bilayer; it reads IVFGLLTFVTVGMVIGSLLQL. Over 28–283 the chain is Lumenal; the sequence is AFINRLEDSY…TKWMRQKATS (256 aa). In terms of domain architecture, Fe2OG dioxygenase spans 162–279; sequence NGELIQVLRY…KWSATKWMRQ (118 aa). 3 residues coordinate Fe cation: H180, D182, and H260. K270 is a binding site for 2-oxoglutarate.

Belongs to the P4HA family. Requires Fe(2+) as cofactor. The cofactor is L-ascorbate.

The protein localises to the endoplasmic reticulum membrane. The enzyme catalyses L-prolyl-[collagen] + 2-oxoglutarate + O2 = trans-4-hydroxy-L-prolyl-[collagen] + succinate + CO2. Its function is as follows. Catalyzes the post-translational formation of 4-hydroxyproline in -Xaa-Pro-Gly- sequences in proline-rich peptide sequences of plant glycoproteins and other proteins. Hydroxylates preferentially prolines in second positions in the -Pro-Pro-Gly-triplets. Hydroxyprolines are important constituent of many plant cell wall glycoproteins such as extensins, hydroxyproline-rich glycoproteins, lectins and arabinogalactan proteins. Can hydroxylate collagen-like peptides and hypoxia-inducible transcription factor peptides. This Arabidopsis thaliana (Mouse-ear cress) protein is Prolyl 4-hydroxylase 1.